The primary structure comprises 391 residues: Elongation factor Tu (391 aa).

Positions 10–201 (KPHVNIGTIG…QVDAYIPTPV (192 aa)) constitute a tr-type G domain. The G1 stretch occupies residues 19 to 26 (GHVDHGKT). 19–26 (GHVDHGKT) contributes to the GTP binding site. Threonine 26 serves as a coordination point for Mg(2+). Positions 55–59 (GITIS) are G2. The interval 76-79 (DCPG) is G3. GTP-binding positions include 76–80 (DCPGH) and 131–134 (NKVD). Residues 131–134 (NKVD) form a G4 region. The G5 stretch occupies residues 169 to 171 (SAL).

This sequence belongs to the TRAFAC class translation factor GTPase superfamily. Classic translation factor GTPase family. EF-Tu/EF-1A subfamily. Monomer.

The protein resides in the cytoplasm. The catalysed reaction is GTP + H2O = GDP + phosphate + H(+). In terms of biological role, GTP hydrolase that promotes the GTP-dependent binding of aminoacyl-tRNA to the A-site of ribosomes during protein biosynthesis. The sequence is that of Elongation factor Tu from Mesorhizobium japonicum (strain LMG 29417 / CECT 9101 / MAFF 303099) (Mesorhizobium loti (strain MAFF 303099)).